Reading from the N-terminus, the 313-residue chain is Porphobilinogen deaminase (313 aa).

Cysteine 249 bears the S-(dipyrrolylmethanemethyl)cysteine mark.

The protein belongs to the HMBS family. In terms of assembly, monomer. It depends on dipyrromethane as a cofactor.

It carries out the reaction 4 porphobilinogen + H2O = hydroxymethylbilane + 4 NH4(+). It functions in the pathway porphyrin-containing compound metabolism; protoporphyrin-IX biosynthesis; coproporphyrinogen-III from 5-aminolevulinate: step 2/4. Functionally, tetrapolymerization of the monopyrrole PBG into the hydroxymethylbilane pre-uroporphyrinogen in several discrete steps. The polypeptide is Porphobilinogen deaminase (Paracoccus denitrificans (strain Pd 1222)).